Consider the following 941-residue polypeptide: Pre-mRNA-processing factor 6 (941 aa).

The interval 1–79 (MNKKKKPFLG…DEDLNDTNYD (79 aa)) is disordered. Residues 39–65 (DANDPVDDRHAPPGKRTVGDQMKKNQA) are compositionally biased toward basic and acidic residues. Over residues 66–78 (ADDDDEDLNDTNY) the composition is skewed to acidic residues. Phosphoserine is present on Ser-143. Residues Thr-180, Thr-266, and Thr-275 each carry the phosphothreonine modification. Phosphoserine is present on Ser-279. HAT repeat units lie at residues 384–416 (TDIR…LEEP), 418–444 (DARI…ARLE), 445–476 (TYEN…LEEA), 554–586 (NALE…FGKN), 588–620 (GTRE…SKWL), 622–654 (GDVP…LESE), 689–721 (DNIR…IEEQ), 723–755 (EMME…LEEK), and 855–887 (RKIT…FELQ).

Identified in the spliceosome B complex. Identified in the spliceosome C complex. Associates with the U5 snRNP particle. Component of the U4/U6-U5 tri-snRNP complex composed of the U4, U6 and U5 snRNAs and at least PRPF3, PRPF4, PRPF6, PRPF8, PRPF31, SNRNP200, TXNL4A, SNRNP40, DDX23, CD2BP2, PPIH, SNU13, EFTUD2, SART1 and USP39, LSm proteins LSm2-8 and Sm proteins. Interacts with ARAF1. Interacts with AR and NR3C1, but not ESR1, independently of the presence of hormones. Interacts with USH1G. Phosphorylated by PRP4K during spliceosome assembly.

It localises to the nucleus. The protein resides in the nucleoplasm. Its subcellular location is the nucleus speckle. Its function is as follows. Involved in pre-mRNA splicing as component of the U4/U6-U5 tri-snRNP complex, one of the building blocks of the spliceosome. Enhances dihydrotestosterone-induced transactivation activity of AR, as well as dexamethasone-induced transactivation activity of NR3C1, but does not affect estrogen-induced transactivation. In Pongo abelii (Sumatran orangutan), this protein is Pre-mRNA-processing factor 6 (PRPF6).